The following is a 352-amino-acid chain: Quinolinate synthase (352 aa).

H48 and S69 together coordinate iminosuccinate. C114 serves as a coordination point for [4Fe-4S] cluster. Iminosuccinate contacts are provided by residues 140-142 and S157; that span reads YAN. C201 contacts [4Fe-4S] cluster. Iminosuccinate contacts are provided by residues 227-229 and T244; that span reads HPE. C298 provides a ligand contact to [4Fe-4S] cluster.

It belongs to the quinolinate synthase family. Type 1 subfamily. [4Fe-4S] cluster serves as cofactor.

The protein localises to the cytoplasm. The catalysed reaction is iminosuccinate + dihydroxyacetone phosphate = quinolinate + phosphate + 2 H2O + H(+). Its pathway is cofactor biosynthesis; NAD(+) biosynthesis; quinolinate from iminoaspartate: step 1/1. Functionally, catalyzes the condensation of iminoaspartate with dihydroxyacetone phosphate to form quinolinate. This chain is Quinolinate synthase, found in Ectopseudomonas mendocina (strain ymp) (Pseudomonas mendocina).